The sequence spans 342 residues: Ribosomal RNA small subunit methyltransferase C (342 aa).

The protein belongs to the methyltransferase superfamily. RsmC family. In terms of assembly, monomer.

The protein localises to the cytoplasm. The enzyme catalyses guanosine(1207) in 16S rRNA + S-adenosyl-L-methionine = N(2)-methylguanosine(1207) in 16S rRNA + S-adenosyl-L-homocysteine + H(+). Specifically methylates the guanine in position 1207 of 16S rRNA in the 30S particle. The sequence is that of Ribosomal RNA small subunit methyltransferase C from Hahella chejuensis (strain KCTC 2396).